A 219-amino-acid chain; its full sequence is Ribose-5-phosphate isomerase A (219 aa).

Residues 28–31 (TGST), 81–84 (DGAD), and 94–97 (KGGG) each bind substrate. Residue E103 is the Proton acceptor of the active site. K121 contacts substrate.

This sequence belongs to the ribose 5-phosphate isomerase family. In terms of assembly, homodimer.

The enzyme catalyses aldehydo-D-ribose 5-phosphate = D-ribulose 5-phosphate. It participates in carbohydrate degradation; pentose phosphate pathway; D-ribose 5-phosphate from D-ribulose 5-phosphate (non-oxidative stage): step 1/1. Catalyzes the reversible conversion of ribose-5-phosphate to ribulose 5-phosphate. This chain is Ribose-5-phosphate isomerase A, found in Shewanella sp. (strain MR-4).